A 436-amino-acid polypeptide reads, in one-letter code: MSKPLPLVTRQGDRIVIVNGLRTPFAKQATAYHGVPAVDLGKIVVSELLARSGISSELIDQLVFGQVVQMPEAPNIAREIVLGTGMSVHTDAYSVSRACATSFQAVANVAESIIAGSVDIAIAGGADSSSVLPIGVSKALARTLVDANKARSLSQKLKLFSRLRLRDLLPVAPAVAEYSTGLRMGDTAEQMAKTYGISREDQDALALRSHQLAAEAWQQGWLHDEVMTAYIPPYREAIIEDNNIRKDSTLAQYAKLRPAFDRQHGSVTAANSTPLTDGAAAVLMMSESKAKALGLPPLGYLRSFAFSAIDVWQDMLLGPSYATPLALDRAGITLADLTLIDMHEAFAAQTLANLKMFASDTFAREKLGRSQAIGEVDMSKFNVLGGSIAYGHPFAATGARMITQTLNELRRRGGGLGLTTACAAGGLGAAMILEVE.

The Acyl-thioester intermediate role is filled by Cys-99. Active-site proton acceptor residues include His-392 and Cys-422.

Belongs to the thiolase-like superfamily. Thiolase family. As to quaternary structure, heterotetramer of two alpha chains (FadJ) and two beta chains (FadI).

Its subcellular location is the cytoplasm. The enzyme catalyses an acyl-CoA + acetyl-CoA = a 3-oxoacyl-CoA + CoA. It functions in the pathway lipid metabolism; fatty acid beta-oxidation. Functionally, catalyzes the final step of fatty acid oxidation in which acetyl-CoA is released and the CoA ester of a fatty acid two carbons shorter is formed. The chain is 3-ketoacyl-CoA thiolase from Yersinia pseudotuberculosis serotype O:1b (strain IP 31758).